The primary structure comprises 357 residues: Putative RING-H2 finger protein ATL37 (357 aa).

Positions 1–31 (MTIFTRDFSHRILACVLLPLFLFQCLPYVTC) are cleaved as a signal peptide. A helical transmembrane segment spans residues 47–67 (SSIIGIVLLSLFLLLLVVYCL). Residues 120–162 (CAICLCEFEDEEPLRWMPPCSHTFHANCIDEWLSSRSTCPVCR) form an RING-type; atypical zinc finger. A disordered region spans residues 172–210 (SFPHPSMDVETGNAQRGVQESPDERSLTGSSVTCNNNAN). Polar residues predominate over residues 198-210 (LTGSSVTCNNNAN). Residue Ser273 is modified to Phosphoserine. Disordered regions lie at residues 281–304 (RSSR…QGRQ) and 327–357 (LDRD…PEKN). Polar residues predominate over residues 283–304 (SRQGYRSGSVGNERTGFSQGRQ). The segment covering 340 to 357 (NDKDFGERSFQRLMPEKN) has biased composition (basic and acidic residues).

The protein belongs to the RING-type zinc finger family. ATL subfamily.

The protein resides in the membrane. It catalyses the reaction S-ubiquitinyl-[E2 ubiquitin-conjugating enzyme]-L-cysteine + [acceptor protein]-L-lysine = [E2 ubiquitin-conjugating enzyme]-L-cysteine + N(6)-ubiquitinyl-[acceptor protein]-L-lysine.. The protein operates within protein modification; protein ubiquitination. In Arabidopsis thaliana (Mouse-ear cress), this protein is Putative RING-H2 finger protein ATL37 (ATL37).